The sequence spans 123 residues: uncharacterized protein (123 aa).

A disordered region spans residues 89–123; it reads GVGGRKLGSEGQSLSENSEQRSLMRWGCGGSSERR. The segment covering 98-109 has biased composition (polar residues); it reads EGQSLSENSEQR.

This is an uncharacterized protein from Encephalitozoon cuniculi (strain GB-M1) (Microsporidian parasite).